Reading from the N-terminus, the 124-residue chain is Fluoride-specific ion channel FluC (124 aa).

The next 4 helical transmembrane spans lie at 4–24 (IVAIALFGALGCLARYLLAGW), 32–52 (GFPYGTLTVNVVGAFLIGLIM), 67–87 (IGLTIGFLGGLTTFSTFSYET), and 96–116 (FITAAVNVLASVLVCLACTWL). Residues Gly75 and Thr78 each contribute to the Na(+) site.

The protein belongs to the fluoride channel Fluc/FEX (TC 1.A.43) family.

Its subcellular location is the cell inner membrane. It catalyses the reaction fluoride(in) = fluoride(out). Its activity is regulated as follows. Na(+) is not transported, but it plays an essential structural role and its presence is essential for fluoride channel function. Fluoride-specific ion channel. Important for reducing fluoride concentration in the cell, thus reducing its toxicity. This is Fluoride-specific ion channel FluC from Geobacter metallireducens (strain ATCC 53774 / DSM 7210 / GS-15).